The primary structure comprises 120 residues: UPF0231 protein ETA_08290 (120 aa).

The protein belongs to the UPF0231 family.

The chain is UPF0231 protein ETA_08290 from Erwinia tasmaniensis (strain DSM 17950 / CFBP 7177 / CIP 109463 / NCPPB 4357 / Et1/99).